Consider the following 350-residue polypeptide: Flap endonuclease 1 (350 aa).

The tract at residues 1-102 (MGVTELGKLI…IEIEKRRRVR (102 aa)) is N-domain. Positions 31, 84, 156, 158, 177, 179, and 241 each coordinate Mg(2+). The I-domain stretch occupies residues 120 to 263 (EARKYAQRAL…RALRLIQEYG (144 aa)).

Belongs to the XPG/RAD2 endonuclease family. FEN1 subfamily. Interacts with PCNA. PCNA stimulates the nuclease activity without altering cleavage specificity. It depends on Mg(2+) as a cofactor.

Structure-specific nuclease with 5'-flap endonuclease and 5'-3' exonuclease activities involved in DNA replication and repair. During DNA replication, cleaves the 5'-overhanging flap structure that is generated by displacement synthesis when DNA polymerase encounters the 5'-end of a downstream Okazaki fragment. Binds the unpaired 3'-DNA end and kinks the DNA to facilitate 5' cleavage specificity. Cleaves one nucleotide into the double-stranded DNA from the junction in flap DNA, leaving a nick for ligation. Also involved in the base excision repair (BER) pathway. Acts as a genome stabilization factor that prevents flaps from equilibrating into structures that lead to duplications and deletions. Also possesses 5'-3' exonuclease activity on nicked or gapped double-stranded DNA. In Caldivirga maquilingensis (strain ATCC 700844 / DSM 13496 / JCM 10307 / IC-167), this protein is Flap endonuclease 1.